We begin with the raw amino-acid sequence, 400 residues long: Argininosuccinate synthase (400 aa).

8–16 (AYSGGLDTS) contacts ATP. L-citrulline is bound at residue Tyr85. ATP is bound at residue Gly115. Thr117, Asn121, and Asp122 together coordinate L-aspartate. Asn121 lines the L-citrulline pocket. The L-citrulline site is built by Arg125, Ser173, Glu258, and Tyr270.

Belongs to the argininosuccinate synthase family. Type 1 subfamily. In terms of assembly, homotetramer.

The protein localises to the cytoplasm. It catalyses the reaction L-citrulline + L-aspartate + ATP = 2-(N(omega)-L-arginino)succinate + AMP + diphosphate + H(+). It participates in amino-acid biosynthesis; L-arginine biosynthesis; L-arginine from L-ornithine and carbamoyl phosphate: step 2/3. This Staphylococcus haemolyticus (strain JCSC1435) protein is Argininosuccinate synthase.